A 204-amino-acid chain; its full sequence is Guanylate kinase (204 aa).

One can recognise a Guanylate kinase-like domain in the interval 18–196 (PKLFTISAPA…SYEVLKSIFI (179 aa)). 25-32 (APAGAGKT) is a binding site for ATP.

The protein belongs to the guanylate kinase family.

It localises to the cytoplasm. The catalysed reaction is GMP + ATP = GDP + ADP. Essential for recycling GMP and indirectly, cGMP. In Chlamydia abortus (strain DSM 27085 / S26/3) (Chlamydophila abortus), this protein is Guanylate kinase.